A 488-amino-acid chain; its full sequence is DELTA-alicitoxin-Pse2b (488 aa).

The signal sequence occupies residues 1 to 21 (MSKPIIFLLTAFVVLTDLGAT). One can recognise an MACPF domain in the interval 24-344 (TEKVEVKAKP…GYLNFDCAYE (321 aa)). Residues 369 to 398 (VCKLGPEGCHSDDDCESDDLIYCACCGDSC) enclose the EGF-like domain. Disulfide bonds link C370/C383, C377/C391, and C393/C398.

The protein resides in the secreted. Its subcellular location is the nematocyst. Its function is as follows. Causes lethal toxicity to the shrimp Palaemon paucidence, and hemolytic activity toward sheep red blood cells. The polypeptide is DELTA-alicitoxin-Pse2b (Phyllodiscus semoni (Night anemone)).